A 521-amino-acid polypeptide reads, in one-letter code: MENDMEEKFEDWKGKEAIPGKHGGIRAASIVCVVVMMENIVFIANGFNFVKYFMGSMHYTPATAANMVTNFMGTSFLLTLFGGFIADSFVTHFTTFIVFCCIELMGLILLTFQAHNPKLLPEKDKTPSTLQSAILFTGLYAMAIGTGGLKASLPSHGGDQIDRRNPRLISRFFDWLYFSICSGCLLAVTVVLWIEEKKGWIWSFNISVGILATALCIFTVGLPFYRFKRPNGSPLKKIAIVIISAARNRNKSDLDEEMMRGLISIYKNNSHNKLKWIDKATLNKNISETEVEETRTFLGLLPIFGSTIVMSCCVAQLSTFSAQQGMLMNKKLFHSFEIPVPSLTAIPLIFMLLSIPLYEFFGKKISSGNNNRSSSFNLKRIGLGLALSSVSMAVSAIVEAKRKHEVVHNNFRISVLWLVFQYLMLSVSDMLTLGGMLEFFYREAPSNMKSISTALGWCSTALGFFLSTTLVEVTNAVTGRLGHQWLGGEDLNKTRLELFYVLLCVLNTLNLLNYIFWAKRY.

12 helical membrane-spanning segments follow: residues 30–50 (IVCV…FNFV), 65–85 (ANMV…GGFI), 89–109 (FVTH…GLIL), 133–153 (AILF…KASL), 172–192 (FFDW…TVVL), 204–224 (FNIS…GLPF), 297–317 (FLGL…VAQL), 338–358 (IPVP…IPLY), 381–401 (IGLG…VEAK), 413–433 (ISVL…MLTL), 451–471 (ISTA…TTLV), and 498–518 (LFYV…IFWA).

It belongs to the major facilitator superfamily. Proton-dependent oligopeptide transporter (POT/PTR) (TC 2.A.17) family. In terms of tissue distribution, expressed in siliques.

It localises to the membrane. In terms of biological role, involved in abscisic acid transport. The sequence is that of Protein NRT1/ PTR FAMILY 4.2 (NPF4.2) from Arabidopsis thaliana (Mouse-ear cress).